Here is a 2618-residue protein sequence, read N- to C-terminus: Mediator of RNA polymerase II transcription subunit 13 (2618 aa).

Low complexity-rich tracts occupy residues 232–255 (FAAASSPPGSNGSAASAGGAVPNP), 509–519 (TPASGTGSLSA), and 532–543 (DSKQLVQQQIQQ). 10 disordered regions span residues 232 to 279 (FAAA…AAPP), 509 to 543 (TPASGTGSLSADGDENEQNKPPQDSKQLVQQQIQQ), 569 to 731 (GNTP…SGGP), 916 to 957 (LNIK…AEGL), 970 to 995 (TSSNDECSSVQIHTPPDSNNPSNGGC), 1036 to 1055 (TKMFPTPPSHEQQHPNSSPC), 1268 to 1384 (PRTP…TGVV), 1521 to 1557 (ASASMPGAGSGHGHGPNGGSNSSSCTPPSSNPHITGY), 1614 to 1633 (SRKNQNKQGPGETSSALDKI), and 1985 to 2060 (KTLL…GETK). Phosphothreonine occurs at positions 571 and 575. Composition is skewed to polar residues over residues 581–590 (STYSRNSLGG), 634–643 (APTSVSNLQQ), and 669–681 (SITASPYVHQTPS). The segment covering 692-706 (AGGGPAGGQGLGTGP) has biased composition (gly residues). Positions 711-723 (AQQPATPTAATSA) are enriched in low complexity. Positions 939–949 (NSSGGGSGSGG) are enriched in gly residues. Residues 1272-1295 (LTPSTVPQPLSSGGSQYLLNQLNC) are compositionally biased toward polar residues. 2 stretches are compositionally biased toward gly residues: residues 1375 to 1384 (GLGGGATGVV) and 1528 to 1538 (AGSGHGHGPNG). Residues 1539–1553 (GSNSSSCTPPSSNPH) are compositionally biased toward low complexity. A compositionally biased stretch (polar residues) spans 1614 to 1629 (SRKNQNKQGPGETSSA). Residues 1993–2014 (GSGNSHSKGGSSCSSNSSSVSG) are compositionally biased toward low complexity. 2 positions are modified to phosphoserine: S2472 and S2475.

This sequence belongs to the Mediator complex subunit 13 family. In terms of assembly, component of the Cdk8 module of the Mediator complex, composed of CycC, Cdk8, kto and skd.

The protein resides in the nucleus. Component of the Mediator complex, a coactivator involved in the regulated transcription of nearly all RNA polymerase II-dependent genes. Mediator functions as a bridge to convey information from gene-specific regulatory proteins to the basal RNA polymerase II transcription machinery. Mediator is recruited to promoters by direct interactions with regulatory proteins and serves as a scaffold for the assembly of a functional preinitiation complex with RNA polymerase II and the general transcription factors. Required for leg and eye development and macrochaete specification or differentiation. Negatively regulates sex comb development. Required for activated transcription of the MtnB and MtnD genes. The protein is Mediator of RNA polymerase II transcription subunit 13 (skd) of Drosophila melanogaster (Fruit fly).